Here is a 314-residue protein sequence, read N- to C-terminus: Olfactory receptor 1E2 (314 aa).

At 1–25 (MMGQNQTSISDFLLLGLPIQPEQQN) the chain is on the extracellular side. N-linked (GlcNAc...) asparagine glycosylation occurs at Asn-5. The chain crosses the membrane as a helical span at residues 26 to 49 (LCYALFLAMYLTTLLGNLLIIVLI). The Cytoplasmic segment spans residues 50-57 (RLDSHLHT). The chain crosses the membrane as a helical span at residues 58 to 79 (PMYLFLSNLSFSDLCFSSVTIP). The Extracellular portion of the chain corresponds to 80–100 (KLLQNMQNQDPSIPYADCLTQ). A disulfide bridge connects residues Cys-97 and Cys-189. A helical membrane pass occupies residues 101–120 (MYFFLLFGDLESFLLVAMAY). Residues 121–139 (DRYVAICFPLHYTAIMSPM) are Cytoplasmic-facing. The chain crosses the membrane as a helical span at residues 140 to 158 (LCLSLVALSWVLTTFHAML). The Extracellular segment spans residues 159–195 (HTLLMARLCFCADNVIPHFFCDMSALLKLACSDTRVN). A helical membrane pass occupies residues 196 to 219 (EWVIFIMGGLIVVIPFLLILGSYA). Topologically, residues 220–236 (RIVSSILKVPSSKGICK) are cytoplasmic. A helical transmembrane segment spans residues 237–259 (AFSTCGSHLSVVSLFYGTIIGLY). Topologically, residues 260-272 (LCPSANSSTLKET) are extracellular. Asn-265 is a glycosylation site (N-linked (GlcNAc...) asparagine). Residues 273–292 (VMAMMYTVVTPMLNPFIYSL) traverse the membrane as a helical segment. Residues 293-314 (RNRDMKGALERVICKRKNPFLL) are Cytoplasmic-facing.

It belongs to the G-protein coupled receptor 1 family.

It is found in the cell membrane. In terms of biological role, odorant receptor. The chain is Olfactory receptor 1E2 (OR1E2) from Gorilla gorilla gorilla (Western lowland gorilla).